Consider the following 904-residue polypeptide: Patched domain-containing protein 4 (904 aa).

The chain crosses the membrane as a helical span at residues 41-61 (HPVFFLTVPAVLTITFGLSAL). N-linked (GlcNAc...) asparagine glycosylation is present at N149. An SSD domain is found at 291 to 450 (TRSKVLVSLV…FSFFGSCLVF (160 aa)). Transmembrane regions (helical) follow at residues 295 to 312 (VLVS…SSSM), 323 to 343 (GLLG…IFFI), 351 to 371 (TLLG…FELL), 394 to 414 (VMVT…MGAS), 431 to 451 (VSIL…LVFA), and 523 to 543 (PFVV…CLQI). N-linked (GlcNAc...) asparagine glycosylation occurs at N625. A run of 3 helical transmembrane segments spans residues 718–738 (PVLI…FLVI), 744–764 (FWLI…MTLW), and 771–791 (ISIL…APLL). N-linked (GlcNAc...) asparagine glycosylation occurs at N820. 2 helical membrane-spanning segments follow: residues 823-843 (SFLI…FTLF) and 845-865 (CLLL…PVFL).

The protein belongs to the patched family.

It is found in the membrane. In terms of biological role, could act as a repressor of canonical hedgehog signaling by antagonizing the effects of SMO, as suggested by down-regulation of hedgehog target genes, including GLI1, PTCH1, and PTCH2 in PTCHD4-expressing cells. In Mus musculus (Mouse), this protein is Patched domain-containing protein 4 (Ptchd4).